The primary structure comprises 457 residues: Adenylosuccinate synthetase (457 aa).

GTP contacts are provided by residues 40 to 46 (GDEGKGK) and 70 to 72 (GHT). Asp41 serves as the catalytic Proton acceptor. Residues Asp41 and Gly70 each coordinate Mg(2+). Residues 41–44 (DEGK), 68–71 (NAGH), Thr161, Arg175, Asn255, Thr270, and Arg334 contribute to the IMP site. His71 serves as the catalytic Proton donor. 330-336 (VTTGRKR) serves as a coordination point for substrate. Residues Arg336, 362-364 (KLD), and 444-446 (GVG) each bind GTP.

It belongs to the adenylosuccinate synthetase family. Homodimer. Requires Mg(2+) as cofactor.

The protein localises to the cytoplasm. The catalysed reaction is IMP + L-aspartate + GTP = N(6)-(1,2-dicarboxyethyl)-AMP + GDP + phosphate + 2 H(+). It participates in purine metabolism; AMP biosynthesis via de novo pathway; AMP from IMP: step 1/2. In terms of biological role, plays an important role in the de novo pathway and in the salvage pathway of purine nucleotide biosynthesis. Catalyzes the first committed step in the biosynthesis of AMP from IMP. The polypeptide is Adenylosuccinate synthetase (Caenorhabditis elegans).